A 329-amino-acid polypeptide reads, in one-letter code: Probable nicotianamine synthase 4 (329 aa).

The protein belongs to the nicotianamine synthase (NAS)-like family.

It carries out the reaction 3 S-adenosyl-L-methionine = nicotianamine + 3 S-methyl-5'-thioadenosine + 3 H(+). In terms of biological role, synthesizes nicotianamine, a polyamine that is the first intermediate in the synthesis of the phytosiderophores of the mugineic acid type found in gramineae which serves as a sensor for the physiological iron status within the plant, and/or might be involved in the transport of iron. This chain is Probable nicotianamine synthase 4 (NAS4), found in Hordeum vulgare (Barley).